An 87-amino-acid polypeptide reads, in one-letter code: Polyketide-8 synthase acyl carrier protein 2 (87 aa).

Positions 8 to 83 constitute a Carrier domain; the sequence is ALDKEQLREL…GTYELLTSKL (76 aa). Ser-43 is modified (O-(pantetheine 4'-phosphoryl)serine).

In terms of processing, 4'-phosphopantetheine is transferred from CoA to a specific serine of the apo-ACP-like protein.

Functionally, acyl carrier protein. The protein is Polyketide-8 synthase acyl carrier protein 2 of Streptomyces avermitilis (strain ATCC 31267 / DSM 46492 / JCM 5070 / NBRC 14893 / NCIMB 12804 / NRRL 8165 / MA-4680).